We begin with the raw amino-acid sequence, 987 residues long: Vacuolar membrane protease (987 aa).

Residues 1–14 lie on the Cytoplasmic side of the membrane; sequence MATRKARNPLAFMP. The helical transmembrane segment at 15 to 35 threads the bilayer; that stretch reads WPVTILTTAMYLALIIPLLVI. Over 36-384 the chain is Vacuolar; it reads HHNVPPAPRT…AFAVFRLHTL (349 aa). Asn51 and Asn117 each carry an N-linked (GlcNAc...) asparagine glycan. Zn(2+) is bound by residues His167 and Asp179. Glu213 serves as the catalytic Proton acceptor. Zn(2+) contacts are provided by Glu214, Glu239, and His312. Residues 385 to 405 traverse the membrane as a helical segment; sequence FALSVTLLIVAPLTLLVTSVI. The Cytoplasmic segment spans residues 406-435; it reads LSRADKMYLFRSSVYSEINDDYIPLRGLRG. The chain crosses the membrane as a helical span at residues 436–456; it reads FFRFPFLISIPTGVTVGLAYM. Topologically, residues 457 to 466 are vacuolar; it reads VTKVNPFIAH. The helical transmembrane segment at 467 to 487 threads the bilayer; sequence SSSYAVWSMMISAWIFLAWFV. At 488 to 501 the chain is on the cytoplasmic side; sequence SRVANSARPSAFHR. A helical membrane pass occupies residues 502–522; that stretch reads VYTWTWMFVLTWSLMVVCTVY. Topologically, residues 523-526 are vacuolar; it reads EHEE. A helical membrane pass occupies residues 527-547; the sequence is GLAGGYFIFFYFAGTFLATWI. Topologically, residues 548–649 are cytoplasmic; that stretch reads SYLELFALPT…WSGVLPRWTW (102 aa). Residues 572-600 are disordered; it reads STQGSRLAASGDEHQDDAAEEDPTESTSL. The chain crosses the membrane as a helical span at residues 650–670; the sequence is LLQLLITAPVILMLIVPLALL. At 671–686 the chain is on the vacuolar side; that stretch reads TTSALSQTGQDGSPQL. A helical membrane pass occupies residues 687-707; the sequence is LIYLFISCLTALLFAPMLPFI. At 708–715 the chain is on the cytoplasmic side; that stretch reads HRYTYHLP. The chain crosses the membrane as a helical span at residues 716–736; the sequence is IFLLFVFIGTMIYNLVAFPFA. The Vacuolar portion of the chain corresponds to 737–987; that stretch reads DSNRLKLFFL…KRSSLGALGS (251 aa). N-linked (GlcNAc...) asparagine glycosylation is found at Asn781 and Asn871.

The protein belongs to the peptidase M28 family. Zn(2+) serves as cofactor.

The protein localises to the vacuole membrane. In terms of biological role, may be involved in vacuolar sorting and osmoregulation. This is Vacuolar membrane protease from Penicillium rubens (strain ATCC 28089 / DSM 1075 / NRRL 1951 / Wisconsin 54-1255) (Penicillium chrysogenum).